We begin with the raw amino-acid sequence, 454 residues long: Maintenance of mitochondrial morphology protein 1 (454 aa).

Residues 1–117 lie on the Lumenal side of the membrane; that stretch reads MESNYTGMDG…SFSSWSFAQG (117 aa). Residues 118–138 form a helical membrane-spanning segment; the sequence is LIVGQVSVVLVLIFFIKFFIF. Over 139 to 454 the chain is Cytoplasmic; it reads SDSSTKTNPN…ESEPGRETHY (316 aa). Positions 144-164 are disordered; it reads KTNPNPAKNSSSTNSLSGLSS. The span at 153 to 164 shows a compositional bias: low complexity; it reads SSSTNSLSGLSS. Residues 215 to 427 form the SMP-LTD domain; sequence PAESLDWFNV…EPRFQFIKLP (213 aa). The a 1,2-diacyl-sn-glycero-3-phosphate site is built by R253, W411, R415, W430, R432, and S433. A disordered region spans residues 434–454; that stretch reads KNTREGKADVDESEPGRETHY. The segment covering 435–454 has biased composition (basic and acidic residues); the sequence is NTREGKADVDESEPGRETHY.

This sequence belongs to the MMM1 family. Homodimer. Component of the ER-mitochondria encounter structure (ERMES) or MDM complex, composed of MMM1, MDM10, MDM12 and MDM34. An MMM1 homodimer associates with one molecule of MDM12 on each side in a pairwise head-to-tail manner, and the SMP-LTD domains of MMM1 and MDM12 generate a continuous hydrophobic tunnel for phospholipid trafficking.

The protein localises to the endoplasmic reticulum membrane. Component of the ERMES/MDM complex, which serves as a molecular tether to connect the endoplasmic reticulum (ER) and mitochondria. Components of this complex are involved in the control of mitochondrial shape and protein biogenesis, and function in nonvesicular lipid trafficking between the ER and mitochondria. Preferentially binds to glycerophospholipids such as phosphatidylcholoine (PC), phosphatidic acid (PA), phosphatidylglycerol (PG), and phosphatidylserine (PS), but not to phosphatidylethanolamine (PE). The MDM12-MMM1 subcomplex functions in the major beta-barrel assembly pathway that is responsible for biogenesis of all outer membrane beta-barrel proteins, and acts in a late step after the SAM complex. The MDM10-MDM12-MMM1 subcomplex further acts in the TOM40-specific pathway after the action of the MDM12-MMM1 complex. Essential for establishing and maintaining the structure of mitochondria and maintenance of mtDNA nucleoids. In Zygosaccharomyces rouxii (strain ATCC 2623 / CBS 732 / NBRC 1130 / NCYC 568 / NRRL Y-229), this protein is Maintenance of mitochondrial morphology protein 1.